The primary structure comprises 199 residues: Pre T-cell antigen receptor alpha (199 aa).

Positions 1–16 (MARTWLLLFLGLRCQA) are cleaved as a signal peptide. Residues 17 to 155 (LPSGIAGTPF…RQVLRLSVLR (139 aa)) lie on the Extracellular side of the membrane. Cysteine 47 and cysteine 107 are oxidised to a cystine. 2 N-linked (GlcNAc...) asparagine glycosylation sites follow: asparagine 67 and asparagine 117. Positions 117–139 (NRSTHPLQLSGEEASTDRTCPQE) are disordered. Residues 156-176 (LLLFKLLLLDVFLTCSRLCVL) traverse the membrane as a helical segment. Topologically, residues 177–199 (AGQHLLPPPSSKQAPASTHQSWT) are cytoplasmic.

Heterodimer with TCRB; disulfide linked. This heterodimer assembles with CD3 proteins into a signaling-competent pre-T-cell receptor complex. Interacts with RHBDD1. Found in CD45+ but not in the CD45- fetal liver cells.

It localises to the membrane. Its subcellular location is the cell membrane. Functionally, component of the pre-T-cell receptor complex (composed of PTCRA, TCRB and the CD3 complex) that has a crucial role in early T-cell development, particularly alpha-beta T cell differentiation. The protein is Pre T-cell antigen receptor alpha of Rattus norvegicus (Rat).